The primary structure comprises 707 residues: Transcription termination factor Rho (707 aa).

Disordered stretches follow at residues Met1–Thr38 and Gln76–Gln321. Composition is skewed to low complexity over residues Ala16–Gly31 and Gln76–Ala93. Basic and acidic residues predominate over residues Arg107–Ala132. Positions Ala153–Asp163 are enriched in low complexity. Residues Asp176 to Ala188 show a composition bias toward polar residues. The span at Gln203 to Gly213 shows a compositional bias: low complexity. The span at Ala215–Asp265 shows a compositional bias: basic and acidic residues. The segment covering Arg301–Arg315 has biased composition (basic residues). The Rho RNA-BD domain occupies Leu331–Ala406. ATP-binding positions include Gly449–Gly454, Lys461–Met466, and Arg492.

It belongs to the Rho family. As to quaternary structure, homohexamer. The homohexamer assembles into an open ring structure.

Facilitates transcription termination by a mechanism that involves Rho binding to the nascent RNA, activation of Rho's RNA-dependent ATPase activity, and release of the mRNA from the DNA template. The polypeptide is Transcription termination factor Rho (Streptomyces lividans).